We begin with the raw amino-acid sequence, 451 residues long: MTENETIFWNRILELAQSQLKQTTYEFFVLDARLVKVENQVATIYLDPMKELFWEQNLKDVILTAGFEVFNAHISVNYQFEDDLASEIEESTSNHIFSRQTINSLPAITSDLNPKYSFDNFIQGDENRWAVAASLAVANTPGTTYNPLFIWGGPGLGKTHLLNAIGNAVLLDNPKARVKYITAENFINEFVIHIRLDTMDELKEKFRNLDLLLIDDIQSLAKKTLLGTQEEFFNTFNALHNNNKQIVLTSDRTPDHLNDLEQRLVTRFKWGLTVNITPPDFETRVAILTNKIQEYNFTFPQDTIEYLAGQFDSNVRDLEGALKDISLVANFKEIDKITVDIAAEAIRARKQDTPKMTIIPIEEIQTQVGKFYGVTVKEIKATKRTQNIVLARQVAMFLAREMTDNSLPKIGKEFGGRDHSTVLHAYNKIKNMIIEDESLRIEIETIKNKIK.

The tract at residues 1 to 101 (MTENETIFWN…TSNHIFSRQT (101 aa)) is domain I, interacts with DnaA modulators. The domain II stretch occupies residues 101–110 (TINSLPAITS). The tract at residues 111–329 (DLNPKYSFDN…GALKDISLVA (219 aa)) is domain III, AAA+ region. 4 residues coordinate ATP: glycine 155, glycine 157, lysine 158, and threonine 159. The domain IV, binds dsDNA stretch occupies residues 330 to 451 (NFKEIDKITV…EIETIKNKIK (122 aa)).

This sequence belongs to the DnaA family. In terms of assembly, oligomerizes as a right-handed, spiral filament on DNA at oriC.

The protein localises to the cytoplasm. In terms of biological role, plays an essential role in the initiation and regulation of chromosomal replication. ATP-DnaA binds to the origin of replication (oriC) to initiate formation of the DNA replication initiation complex once per cell cycle. Binds the DnaA box (a 9 base pair repeat at the origin) and separates the double-stranded (ds)DNA. Forms a right-handed helical filament on oriC DNA; dsDNA binds to the exterior of the filament while single-stranded (ss)DNA is stabiized in the filament's interior. The ATP-DnaA-oriC complex binds and stabilizes one strand of the AT-rich DNA unwinding element (DUE), permitting loading of DNA polymerase. After initiation quickly degrades to an ADP-DnaA complex that is not apt for DNA replication. Binds acidic phospholipids. The polypeptide is Chromosomal replication initiator protein DnaA (Streptococcus uberis (strain ATCC BAA-854 / 0140J)).